The sequence spans 188 residues: Elongation factor P (188 aa).

It belongs to the elongation factor P family.

It localises to the cytoplasm. It participates in protein biosynthesis; polypeptide chain elongation. Functionally, involved in peptide bond synthesis. Stimulates efficient translation and peptide-bond synthesis on native or reconstituted 70S ribosomes in vitro. Probably functions indirectly by altering the affinity of the ribosome for aminoacyl-tRNA, thus increasing their reactivity as acceptors for peptidyl transferase. The protein is Elongation factor P of Paramagnetospirillum magneticum (strain ATCC 700264 / AMB-1) (Magnetospirillum magneticum).